Here is a 483-residue protein sequence, read N- to C-terminus: Phloretin 2'-O-glucosyltransferase (483 aa).

His-15 serves as the catalytic Proton acceptor. Residue His-15 participates in an anthocyanidin binding. Catalysis depends on Asp-118, which acts as the Charge relay. Thr-140, Ala-360, Gln-362, His-377, Trp-380, Asn-381, Ser-382, and Glu-385 together coordinate UDP-alpha-D-glucose. An anthocyanidin is bound at residue Ala-400. 2 residues coordinate UDP-alpha-D-glucose: Glu-401 and Gln-402.

This sequence belongs to the UDP-glycosyltransferase family.

The enzyme catalyses phloretin + UDP-alpha-D-glucose = phlorizin + UDP + H(+). Its function is as follows. Glycosyltransferase that possesses phloretin 2'-O-glycosyltransferase activity. Converts phloretin to phlorizin (phloretin 2'-O-glucoside), a potent antioxidant. Is specific for phloretin and does not possess glycosyltransferase activity toward caffeic acid, catechin, chlorogenic acid, 2-coumaric acid, 3-coumaric acid, 4-coumaric acid, cyanidin, 3,4-dihydroxyhydrocinnamic acid, epicatechin, 3-hydroxybenzoic acid, naringenin, 3,4-dihydroxybenzoic acid, quercetin and rutin. Can glycosylate phloretin in the presence of UDP-glucose, UDP-xylose and UDP-galactose. This is Phloretin 2'-O-glucosyltransferase from Malus domestica (Apple).